Here is a 963-residue protein sequence, read N- to C-terminus: Transcription factor cbf12 (963 aa).

Disordered regions lie at residues 130 to 207 (NPSN…SQGL) and 248 to 289 (VNMN…PPQK). 2 stretches are compositionally biased toward polar residues: residues 143-207 (FENN…SQGL) and 249-289 (NMNS…PPQK).

It belongs to the Su(H) family.

The protein localises to the nucleus. In terms of biological role, transcription factor which function may be to trigger the increase of adhesion at stationary phase, possibly by counteracting or replacing cbf11 at the respective promoters. May also play a cbf11-antagonistic role in the regulation of a number of other important processes such as extracellular material production, colony morphogenesis, ploidy maintenance, or meiosis. In Schizosaccharomyces pombe (strain 972 / ATCC 24843) (Fission yeast), this protein is Transcription factor cbf12 (cbf12).